The primary structure comprises 894 residues: GTPase-activating protein GYP5 (894 aa).

Over residues 1–23 the composition is skewed to basic and acidic residues; it reads MSSDKSIEKNTDTIASEVHEGDN. A disordered region spans residues 1 to 324; the sequence is MSSDKSIEKN…VPPPLEEEMK (324 aa). Phosphoserine occurs at positions 25 and 30. Thr-89 is modified (phosphothreonine). Over residues 134–164 the composition is skewed to basic and acidic residues; the sequence is IEKEYDAVKENEKVYADTKEVVSSPENREVT. Composition is skewed to polar residues over residues 184-200 and 268-279; these read GTTT…SSEV and SSENEVSAIPTT. Phosphoserine is present on Ser-389. Residues 451-630 form the Rab-GAP TBC domain; that stretch reads GIPPQIRGII…RIFDIVFVEG (180 aa). Residues 732–872 are a coiled coil; it reads EKEQKKEDHY…INKEQVSTAS (141 aa).

This sequence belongs to the GYP5 family. Interacts with GYL1 and RVS167; and is part of SEC4-containing complexes.

The protein localises to the cytoplasm. It localises to the bud. Its subcellular location is the bud neck. In terms of biological role, GTPase-activating protein which accelerates the GTP hydrolysis rate of YPT1 and SEC4. Involved in ER to Golgi trafficking and polarized exocytosis. This is GTPase-activating protein GYP5 (GYP5) from Saccharomyces cerevisiae (strain ATCC 204508 / S288c) (Baker's yeast).